The chain runs to 1125 residues: ATP-dependent DNA helicase Hel308 (1125 aa).

The Q motif motif lies at 1–29 (MKVDELPIDERIKRVIKERGIEELYPPQA). Residues Gln-28 and 46–53 (IPTASGKT) each bind ATP. Residues 33-197 (KSGVLEGKNL…WLDASLVVSD (165 aa)) enclose the Helicase ATP-binding domain. The DEAH box signature appears at 145–148 (DEVH). The 215-residue stretch at 226 to 440 (NWESLVLDAV…ELKERLESET (215 aa)) folds into the Helicase C-terminal domain. A DOD-type homing endonuclease domain is found at 500–640 (LIGLWIAEGS…LQLLVASLGY (141 aa)).

The protein belongs to the helicase family. Hel308 subfamily. In terms of assembly, monomer. Post-translationally, this protein undergoes a protein self splicing that involves a post-translational excision of the intervening region (intein) followed by peptide ligation.

The enzyme catalyses Couples ATP hydrolysis with the unwinding of duplex DNA by translocating in the 3'-5' direction.. It carries out the reaction ATP + H2O = ADP + phosphate + H(+). Its function is as follows. DNA-dependent ATPase and 3'-5' DNA helicase that may be involved in repair of stalled replication forks. The polypeptide is ATP-dependent DNA helicase Hel308 (Thermococcus kodakarensis (strain ATCC BAA-918 / JCM 12380 / KOD1) (Pyrococcus kodakaraensis (strain KOD1))).